Consider the following 179-residue polypeptide: Large ribosomal subunit protein uL5 (179 aa).

Belongs to the universal ribosomal protein uL5 family. Part of the 50S ribosomal subunit; part of the 5S rRNA/L5/L18/L25 subcomplex. Contacts the 5S rRNA and the P site tRNA. Forms a bridge to the 30S subunit in the 70S ribosome.

Its function is as follows. This is one of the proteins that bind and probably mediate the attachment of the 5S RNA into the large ribosomal subunit, where it forms part of the central protuberance. In the 70S ribosome it contacts protein S13 of the 30S subunit (bridge B1b), connecting the 2 subunits; this bridge is implicated in subunit movement. Contacts the P site tRNA; the 5S rRNA and some of its associated proteins might help stabilize positioning of ribosome-bound tRNAs. This chain is Large ribosomal subunit protein uL5, found in Clostridium botulinum (strain Alaska E43 / Type E3).